Consider the following 100-residue polypeptide: NADH-quinone oxidoreductase subunit K (100 aa).

3 helical membrane passes run 2–22 (ISLN…LFGI), 28–48 (ILML…GFVA), and 63–83 (LFII…VVIW).

The protein belongs to the complex I subunit 4L family. In terms of assembly, NDH-1 is composed of 14 different subunits. Subunits NuoA, H, J, K, L, M, N constitute the membrane sector of the complex.

It localises to the cell inner membrane. The catalysed reaction is a quinone + NADH + 5 H(+)(in) = a quinol + NAD(+) + 4 H(+)(out). Its function is as follows. NDH-1 shuttles electrons from NADH, via FMN and iron-sulfur (Fe-S) centers, to quinones in the respiratory chain. The immediate electron acceptor for the enzyme in this species is believed to be ubiquinone. Couples the redox reaction to proton translocation (for every two electrons transferred, four hydrogen ions are translocated across the cytoplasmic membrane), and thus conserves the redox energy in a proton gradient. In Helicobacter hepaticus (strain ATCC 51449 / 3B1), this protein is NADH-quinone oxidoreductase subunit K.